A 1515-amino-acid polypeptide reads, in one-letter code: DNA topoisomerase 2-binding protein 1 (1515 aa).

2 consecutive BRCT domains span residues 101-189 and 195-284; these read VYNM…KYTD and FKCP…IYKA. T298 is modified (phosphothreonine). BRCT domains follow at residues 353-443, 551-636, and 644-741; these read APED…SYIH, REEG…SNPL, and SGVT…HFLV. Residues 759-893 form an interaction with CIP2A region; that stretch reads VSSNPDLPAH…TDSHSASPQL (135 aa). Position 782 is a phosphothreonine (T782). The disordered stretch occupies residues 799–826; the sequence is SQQRGQDPTFPPVRQPLTKEPSLHLDTP. T851 carries the post-translational modification Phosphothreonine. Phosphoserine is present on residues S862, S863, S866, S888, and S890. Over residues 880-891 the composition is skewed to polar residues; that stretch reads SSRNTDSHSASP. The interval 880-901 is disordered; sequence SSRNTDSHSASPQLKGAHLEEE. The BRCT 6 domain maps to 902 to 993; it reads ETRKPLDSVV…KHLPESLYPH (92 aa). Positions 1020 to 1055 are disordered; it reads VSASKDDGPDHLSVEGNETNTMGTNDKESPLLNGSG. The segment covering 1023–1032 has biased composition (basic and acidic residues); sequence SKDDGPDHLS. T1064 is subject to Phosphothreonine. A compositionally biased stretch (low complexity) spans 1097–1116; it reads SRSSCNSASSTPDSARSVRS. Disordered stretches follow at residues 1097–1119, 1203–1255, and 1491–1515; these read SRSS…SGRS, VTQA…TQEE, and KKGG…PRVH. Positions 1217 to 1229 are enriched in pro residues; it reads PPVAERPLIPEPQ. Residues 1255 to 1347 form the BRCT 7 domain; it reads ETHRKVKKQY…RFVQEEDYEW (93 aa). Positions 1510–1513 match the Nuclear localization signal motif; it reads KRPR.

It belongs to the TOPBP1 family. As to quaternary structure, interacts (via BRCT domains 1 and 2) with (phosphorylated) MDC1; promoting TOPBP1 recruitment to DNA damage sites during mitosis. Interacts (via BRCT domains 7 and 8) with (autophosphorylated) ATR; promoting activation of ATR. Interacts (via BRCT domains 7 and 8) with (phosphorylated) POLQ; specifically binds POLQ phosphorylated by PLK1, promoting POLQ recruitment to DNA damage sites. Interacts (via BRCT domains 1 and 2) with (phosphorylated) RAD9A. Interacts (via BRCT domain 2) with (phosphorylated) TP53BP1. Interacts (via BRCT domain 2) with (phosphorylated) HTATSF1. Interacts (via BRCT domains 7 and 8) with (phosphorylated) RAD51; promoting RAD51 recruitment to damaged chromatin. Interacts with CIP2A; forming the CIP2A-TOPBP1 complex. Interacts with POLE. Interacts with UBR5. Interacts with E2F1. Interacts with PML. Interacts with SMARCA2. Interacts with SMARCA4. Interacts with RHNO1. May interact with TOP2B. Interacts with TICRR. Interacts with HELB. Phosphorylated on serine and threonine residues in response to X-ray irradiation. Post-translationally, ubiquitinated and degraded by the proteasome. X-ray irradiation reduces ubiquitination. Deubiquitinated by USP13; leading to TOPBP1 stabilizion and activation of the ATR-TOPBP1 axis pathway. As to expression, highly expressed in testis.

The protein resides in the nucleus. The protein localises to the chromosome. It is found in the cytoplasm. Its subcellular location is the cytoskeleton. It localises to the microtubule organizing center. The protein resides in the centrosome. The protein localises to the spindle pole. Scaffold protein that acts as a key protein-protein adapter in DNA replication and DNA repair. Composed of multiple BRCT domains, which specifically recognize and bind phosphorylated proteins, bringing proteins together into functional combinations. Required for DNA replication initiation but not for the formation of pre-replicative complexes or the elongation stages. Necessary for the loading of replication factors onto chromatin, including GMNC, CDC45, DNA polymerases and components of the GINS complex. Plays a central role in DNA repair by bridging proteins and promoting recruitment of proteins to DNA damage sites. Involved in double-strand break (DSB) repair via homologous recombination in S-phase by promoting the exchange between the DNA replication factor A (RPA) complex and RAD51. Mechanistically, TOPBP1 is recruited to DNA damage sites in S-phase via interaction with phosphorylated HTATSF1, and promotes the loading of RAD51, thereby facilitating RAD51 nucleofilaments formation and RPA displacement, followed by homologous recombination. Involved in microhomology-mediated end-joining (MMEJ) DNA repair by promoting recruitment of polymerase theta (POLQ) to DNA damage sites during mitosis. MMEJ is an alternative non-homologous end-joining (NHEJ) machinery that takes place during mitosis to repair DSBs in DNA that originate in S-phase. Recognizes and binds POLQ phosphorylated by PLK1, enabling its recruitment to DSBs for subsequent repair. Involved in G1 DNA damage checkpoint by acting as a molecular adapter that couples TP53BP1 and the 9-1-1 complex. In response to DNA damage, triggers the recruitment of checkpoint signaling proteins on chromatin, which activate the CHEK1 signaling pathway and block S-phase progression. Acts as an activator of the kinase activity of ATR. Also required for chromosomal stability when DSBs occur during mitosis by forming filamentous assemblies that bridge MDC1 and tether broken chromosomes during mitosis. Together with CIP2A, plays an essential role in the response to genome instability generated by the presence of acentric chromosome fragments derived from shattered chromosomes within micronuclei. Micronuclei, which are frequently found in cancer cells, consist of chromatin surrounded by their own nuclear membrane: following breakdown of the micronuclear envelope, a process associated with chromothripsis, the CIP2A-TOPBP1 complex tethers chromosome fragments during mitosis to ensure clustered segregation of the fragments to a single daughter cell nucleus, facilitating re-ligation with limited chromosome scattering and loss. Recruits the SWI/SNF chromatin remodeling complex to E2F1-responsive promoters, thereby down-regulating E2F1 activity and inhibiting E2F1-dependent apoptosis during G1/S transition and after DNA damage. In Mus musculus (Mouse), this protein is DNA topoisomerase 2-binding protein 1.